A 302-amino-acid polypeptide reads, in one-letter code: Succinate--CoA ligase [ADP-forming] subunit alpha (302 aa).

CoA contacts are provided by residues T17–T20, K43, and I96–E98. Y159 lines the substrate pocket. The active-site Tele-phosphohistidine intermediate is H247.

It belongs to the succinate/malate CoA ligase alpha subunit family. Heterotetramer of two alpha and two beta subunits.

The catalysed reaction is succinate + ATP + CoA = succinyl-CoA + ADP + phosphate. The enzyme catalyses GTP + succinate + CoA = succinyl-CoA + GDP + phosphate. It participates in carbohydrate metabolism; tricarboxylic acid cycle; succinate from succinyl-CoA (ligase route): step 1/1. Succinyl-CoA synthetase functions in the citric acid cycle (TCA), coupling the hydrolysis of succinyl-CoA to the synthesis of either ATP or GTP and thus represents the only step of substrate-level phosphorylation in the TCA. The alpha subunit of the enzyme binds the substrates coenzyme A and phosphate, while succinate binding and nucleotide specificity is provided by the beta subunit. The chain is Succinate--CoA ligase [ADP-forming] subunit alpha from Staphylococcus epidermidis (strain ATCC 12228 / FDA PCI 1200).